We begin with the raw amino-acid sequence, 554 residues long: Acurin A biosynthesis cluster MFS-type transporter (554 aa).

Transmembrane regions (helical) follow at residues W24–I44, L60–G80, L96–L116, G123–L143, and G151–F171. N174 is a glycosylation site (N-linked (GlcNAc...) asparagine). 3 consecutive transmembrane segments (helical) span residues W179 to L199, W219 to A239, and I251 to P271. N283 carries an N-linked (GlcNAc...) asparagine glycan. 6 helical membrane-spanning segments follow: residues L289–I309, V324–M344, S352–D372, I385–S405, T417–F437, and V496–A516.

The protein belongs to the major facilitator superfamily.

The protein resides in the membrane. Functionally, MFS-type transporter that may have a role in the biosynthesis of acurin A, a highly reduced polyketide coupled to a serine via a peptide bond; either in extra- or intracellular transport. This Aspergillus aculeatus (strain ATCC 16872 / CBS 172.66 / WB 5094) protein is Acurin A biosynthesis cluster MFS-type transporter.